Consider the following 841-residue polypeptide: Protein translocase subunit SecA (841 aa).

Residues glutamine 85, 103-107 (GEGKT), and aspartate 492 contribute to the ATP site. Residues 786–812 (REEVVQGQTTAHQPQDGDEAKQAKKAP) are disordered. Zn(2+) is bound by residues cysteine 825, cysteine 827, cysteine 836, and cysteine 837.

This sequence belongs to the SecA family. As to quaternary structure, monomer and homodimer. Part of the essential Sec protein translocation apparatus which comprises SecA, SecYEG and auxiliary proteins SecDF. Other proteins may also be involved. Requires Zn(2+) as cofactor.

It localises to the cell membrane. It is found in the cytoplasm. The catalysed reaction is ATP + H2O + cellular proteinSide 1 = ADP + phosphate + cellular proteinSide 2.. In terms of biological role, part of the Sec protein translocase complex. Interacts with the SecYEG preprotein conducting channel. Has a central role in coupling the hydrolysis of ATP to the transfer of proteins into and across the cell membrane, serving as an ATP-driven molecular motor driving the stepwise translocation of polypeptide chains across the membrane. The chain is Protein translocase subunit SecA from Bacillus velezensis (strain DSM 23117 / BGSC 10A6 / LMG 26770 / FZB42) (Bacillus amyloliquefaciens subsp. plantarum).